The primary structure comprises 381 residues: MLLSIGMLMLSATQVYTILTVQLFAFLNLLPVEADILAYNFENASQTFEDLPARFGYRLPAEGLKGFLINSKPENACEPIVPPPLKDNSSGTFIVLIRRLDCNFDIKVLNAQRAGYKAAIVHNVDSDDLISMGSNDIDTLKKIDIPSVFIGESSANSLKDEFTYEKGGHIILVPELSLPLEYYLIPFLIIVGICLILIVIFMITKFVQDRHRNRRNRLRKDQLKKLPVHKFKKGDEYDVCAICLEEYEDGDKLRILPCSHAYHCKCVDPWLTKTKKTCPVCKQKVVPSQGDSDSDTDSSQEENQVSEHTPLLPPSASARTQSFGSLSESHSHHNMTESSDYEDDDNEETDSSDADNEITDHSVVVQLQPNGEQDYNIANTV.

Residues 1–34 (MLLSIGMLMLSATQVYTILTVQLFAFLNLLPVEA) form the signal peptide. The Lumenal portion of the chain corresponds to 35–182 (DILAYNFENA…VPELSLPLEY (148 aa)). Residues 64–160 (LKGFLINSKP…GESSANSLKD (97 aa)) form the PA domain. A glycan (N-linked (GlcNAc...) asparagine) is linked at Asn88. The helical transmembrane segment at 183–203 (YLIPFLIIVGICLILIVIFMI) threads the bilayer. The Cytoplasmic segment spans residues 204-381 (TKFVQDRHRN…EQDYNIANTV (178 aa)). The RING-type; atypical zinc-finger motif lies at 240-282 (CAICLEEYEDGDKLRILPCSHAYHCKCVDPWLTKTKKTCPVCK). Residues 285 to 381 (VVPSQGDSDS…EQDYNIANTV (97 aa)) are disordered. The span at 317 to 328 (SARTQSFGSLSE) shows a compositional bias: polar residues. The span at 339-357 (SDYEDDDNEETDSSDADNE) shows a compositional bias: acidic residues. Residues 365 to 381 (VQLQPNGEQDYNIANTV) show a composition bias toward polar residues.

Interacts with ERN1. Autoubiquitinated. In terms of processing, N-glycosylated and also modified with chondroitin sulfate. As to expression, expressed in the brain, heart, kidney, liver and spleen. Higher expression in adult tissues compared to the embryonic counterparts.

The protein localises to the endoplasmic reticulum membrane. Its subcellular location is the late endosome membrane. It is found in the lysosome membrane. The protein resides in the nucleus inner membrane. It catalyses the reaction S-ubiquitinyl-[E2 ubiquitin-conjugating enzyme]-L-cysteine + [acceptor protein]-L-lysine = [E2 ubiquitin-conjugating enzyme]-L-cysteine + N(6)-ubiquitinyl-[acceptor protein]-L-lysine.. It participates in protein modification; protein ubiquitination. E3 ubiquitin-protein ligase that regulates cell proliferation. Involved in apoptosis regulation. Mediates ER stress-induced activation of JNK signaling pathway and apoptosis by promoting ERN1 activation and splicing of XBP1 mRNA. Also involved in protein trafficking and localization. This is E3 ubiquitin-protein ligase RNF13 (Rnf13) from Mus musculus (Mouse).